The sequence spans 714 residues: Fatty acid oxidation complex subunit alpha (714 aa).

The tract at residues 1–190 is enoyl-CoA hydratase; that stretch reads MEMASAFTLN…KLGLVDDVVP (190 aa). Residues 306 to 714 are 3-hydroxyacyl-CoA dehydrogenase; sequence APLNSVGILG…FWKTTATDLQ (409 aa).

The protein in the N-terminal section; belongs to the enoyl-CoA hydratase/isomerase family. This sequence in the central section; belongs to the 3-hydroxyacyl-CoA dehydrogenase family. In terms of assembly, heterotetramer of two alpha chains (FadJ) and two beta chains (FadI).

It is found in the cytoplasm. The catalysed reaction is a (3S)-3-hydroxyacyl-CoA = a (2E)-enoyl-CoA + H2O. It catalyses the reaction a 4-saturated-(3S)-3-hydroxyacyl-CoA = a (3E)-enoyl-CoA + H2O. It carries out the reaction a (3S)-3-hydroxyacyl-CoA + NAD(+) = a 3-oxoacyl-CoA + NADH + H(+). The enzyme catalyses (3S)-3-hydroxybutanoyl-CoA = (3R)-3-hydroxybutanoyl-CoA. Its pathway is lipid metabolism; fatty acid beta-oxidation. In terms of biological role, catalyzes the formation of a hydroxyacyl-CoA by addition of water on enoyl-CoA. Also exhibits 3-hydroxyacyl-CoA epimerase and 3-hydroxyacyl-CoA dehydrogenase activities. The chain is Fatty acid oxidation complex subunit alpha from Shigella boydii serotype 18 (strain CDC 3083-94 / BS512).